A 372-amino-acid chain; its full sequence is Glutamine synthetase (372 aa).

The GS beta-grasp domain maps to 24–103; it reads VIAEYVWVDG…VLAECFNSDG (80 aa). The GS catalytic domain occupies 110 to 372; it reads HRHEANKLFQ…KEYERETNEQ (263 aa).

This sequence belongs to the glutamine synthetase family. In terms of assembly, homooctamer.

Its subcellular location is the cytoplasm. It catalyses the reaction L-glutamate + NH4(+) + ATP = L-glutamine + ADP + phosphate + H(+). This Candida glabrata (strain ATCC 2001 / BCRC 20586 / JCM 3761 / NBRC 0622 / NRRL Y-65 / CBS 138) (Yeast) protein is Glutamine synthetase (GLN1).